Here is a 163-residue protein sequence, read N- to C-terminus: Large ribosomal subunit protein uL13m (163 aa).

Ser-2 carries the N-acetylserine modification. The propeptide occupies 2 to 4; sequence SQK.

It belongs to the universal ribosomal protein uL13 family. Component of the mitochondrial large ribosomal subunit (mt-LSU). Mature yeast 74S mitochondrial ribosomes consist of a small (37S) and a large (54S) subunit. The 37S small subunit contains a 15S ribosomal RNA (15S mt-rRNA) and 34 different proteins. The 54S large subunit contains a 21S rRNA (21S mt-rRNA) and 46 different proteins.

It localises to the mitochondrion. Functionally, component of the mitochondrial ribosome (mitoribosome), a dedicated translation machinery responsible for the synthesis of mitochondrial genome-encoded proteins, including at least some of the essential transmembrane subunits of the mitochondrial respiratory chain. The mitoribosomes are attached to the mitochondrial inner membrane and translation products are cotranslationally integrated into the membrane. In Saccharomyces cerevisiae (strain ATCC 204508 / S288c) (Baker's yeast), this protein is Large ribosomal subunit protein uL13m (MRPL23).